Here is a 370-residue protein sequence, read N- to C-terminus: Phospho-2-dehydro-3-deoxyheptonate aldolase, phenylalanine-inhibited (370 aa).

It belongs to the class-I DAHP synthase family.

It carries out the reaction D-erythrose 4-phosphate + phosphoenolpyruvate + H2O = 7-phospho-2-dehydro-3-deoxy-D-arabino-heptonate + phosphate. The protein operates within metabolic intermediate biosynthesis; chorismate biosynthesis; chorismate from D-erythrose 4-phosphate and phosphoenolpyruvate: step 1/7. Its activity is regulated as follows. Inhibited by phenyalanine. Functionally, stereospecific condensation of phosphoenolpyruvate (PEP) and D-erythrose-4-phosphate (E4P) giving rise to 3-deoxy-D-arabino-heptulosonate-7-phosphate (DAHP). The protein is Phospho-2-dehydro-3-deoxyheptonate aldolase, phenylalanine-inhibited (ARO3) of Saccharomyces cerevisiae (strain ATCC 204508 / S288c) (Baker's yeast).